The primary structure comprises 64 residues: Large ribosomal subunit protein bL35 (64 aa).

Positions 1–31 (MPKMKTHSGAKKRFKLTGTGKLKRQQANRRH) are disordered.

Belongs to the bacterial ribosomal protein bL35 family.

In Paenarthrobacter aurescens (strain TC1), this protein is Large ribosomal subunit protein bL35.